We begin with the raw amino-acid sequence, 117 residues long: NADH-ubiquinone oxidoreductase chain 3 (117 aa).

Transmembrane regions (helical) follow at residues 4-24 (IILI…LASI), 60-80 (ITII…MIII), and 86-106 (IMIW…GLYH).

Belongs to the complex I subunit 3 family.

The protein resides in the mitochondrion membrane. It carries out the reaction a ubiquinone + NADH + 5 H(+)(in) = a ubiquinol + NAD(+) + 4 H(+)(out). In terms of biological role, core subunit of the mitochondrial membrane respiratory chain NADH dehydrogenase (Complex I) that is believed to belong to the minimal assembly required for catalysis. Complex I functions in the transfer of electrons from NADH to the respiratory chain. The immediate electron acceptor for the enzyme is believed to be ubiquinone. This chain is NADH-ubiquinone oxidoreductase chain 3 (mt:ND3), found in Drosophila subobscura (Fruit fly).